The primary structure comprises 303 residues: tRNA pseudouridine synthase B (303 aa).

Catalysis depends on Asp47, which acts as the Nucleophile.

It belongs to the pseudouridine synthase TruB family. Type 1 subfamily.

It carries out the reaction uridine(55) in tRNA = pseudouridine(55) in tRNA. Functionally, responsible for synthesis of pseudouridine from uracil-55 in the psi GC loop of transfer RNAs. In Ruegeria pomeroyi (strain ATCC 700808 / DSM 15171 / DSS-3) (Silicibacter pomeroyi), this protein is tRNA pseudouridine synthase B.